The chain runs to 233 residues: Ion-translocating oxidoreductase complex subunit E (233 aa).

Transmembrane regions (helical) follow at residues 18-38, 39-59, 69-89, 92-112, 128-148, and 182-202; these read ALVQLLGLCPLLAVSSTATNA, LGLGLATTLVLVCTNTAVSAL, IPIYVMIIASVVSTVQMLINA, FGLYQSLGIFIPLIVTNCIVI, ALDGFAMGMGATCALFVLGAL, and PFLLAMLPPGAFIGLGLLLAG.

Belongs to the NqrDE/RnfAE family. The complex is composed of six subunits: RnfA, RnfB, RnfC, RnfD, RnfE and RnfG.

Its subcellular location is the cell inner membrane. Its function is as follows. Part of a membrane-bound complex that couples electron transfer with translocation of ions across the membrane. In Yersinia pestis bv. Antiqua (strain Angola), this protein is Ion-translocating oxidoreductase complex subunit E.